The primary structure comprises 63 residues: Large ribosomal subunit protein uL29 (63 aa).

The protein belongs to the universal ribosomal protein uL29 family.

This chain is Large ribosomal subunit protein uL29, found in Actinobacillus succinogenes (strain ATCC 55618 / DSM 22257 / CCUG 43843 / 130Z).